Reading from the N-terminus, the 238-residue chain is Alpha-tubulin N-acetyltransferase (238 aa).

The region spanning 1-196 (MEFDFDISQS…NNFVVFEDLF (196 aa)) is the N-acetyltransferase domain. Acetyl-CoA-binding positions include 129 to 142 (FYVH…GNGK) and 165 to 174 (SFKFLSFLQK).

It belongs to the acetyltransferase ATAT1 family.

The catalysed reaction is L-lysyl-[alpha-tubulin] + acetyl-CoA = N(6)-acetyl-L-lysyl-[alpha-tubulin] + CoA + H(+). Its function is as follows. Specifically acetylates 'Lys-40' in alpha-tubulin on the lumenal side of microtubules. Promotes microtubule destabilization and accelerates microtubule dynamics; this activity may be independent of acetylation activity. Acetylates alpha-tubulin with a slow enzymatic rate, due to a catalytic site that is not optimized for acetyl transfer. Enters the microtubule through each end and diffuses quickly throughout the lumen of microtubules. Acetylates only long/old microtubules because of its slow acetylation rate since it does not have time to act on dynamically unstable microtubules before the enzyme is released. This chain is Alpha-tubulin N-acetyltransferase, found in Trichoplax adhaerens (Trichoplax reptans).